Reading from the N-terminus, the 624-residue chain is Penicillin-binding protein 4 (624 aa).

Residues 1–21 (MTMLRKIIGWILLLCIIPLFA) form the signal peptide. E96 (proton donor; for transglycosylase activity) is an active-site residue. S388 acts as the Acyl-ester intermediate; for transpeptidase activity in catalysis.

It in the N-terminal section; belongs to the glycosyltransferase 51 family. The protein in the C-terminal section; belongs to the transpeptidase family. The N-terminus is blocked.

The protein localises to the cell membrane. It catalyses the reaction [GlcNAc-(1-&gt;4)-Mur2Ac(oyl-L-Ala-gamma-D-Glu-L-Lys-D-Ala-D-Ala)](n)-di-trans,octa-cis-undecaprenyl diphosphate + beta-D-GlcNAc-(1-&gt;4)-Mur2Ac(oyl-L-Ala-gamma-D-Glu-L-Lys-D-Ala-D-Ala)-di-trans,octa-cis-undecaprenyl diphosphate = [GlcNAc-(1-&gt;4)-Mur2Ac(oyl-L-Ala-gamma-D-Glu-L-Lys-D-Ala-D-Ala)](n+1)-di-trans,octa-cis-undecaprenyl diphosphate + di-trans,octa-cis-undecaprenyl diphosphate + H(+). The enzyme catalyses Preferential cleavage: (Ac)2-L-Lys-D-Ala-|-D-Ala. Also transpeptidation of peptidyl-alanyl moieties that are N-acyl substituents of D-alanine.. Its function is as follows. Cell wall formation. Synthesis of cross-linked peptidoglycan from the lipid intermediates. The enzyme has a penicillin-insensitive transglycosylase N-terminal domain (formation of linear glycan strands) and a penicillin-sensitive transpeptidase C-terminal domain (cross-linking of the peptide subunits). Has a partially redundant function with PBP-2A (pbpA) during spore outgrowth. The polypeptide is Penicillin-binding protein 4 (Bacillus subtilis (strain 168)).